A 107-amino-acid chain; its full sequence is Iron-sulfur cluster assembly protein CyaY (107 aa).

This sequence belongs to the frataxin family.

In terms of biological role, involved in iron-sulfur (Fe-S) cluster assembly. May act as a regulator of Fe-S biogenesis. The sequence is that of Iron-sulfur cluster assembly protein CyaY from Yersinia intermedia.